The sequence spans 164 residues: Neurotrophin-3 (164 aa).

Residues 1–3 (IQS) form the signal peptide. Residues 4 to 120 (TNMDQQGSLT…ALNRTSRRKR (117 aa)) constitute a propeptide that is removed on maturation. N-linked (GlcNAc...) asparagine glycosylation occurs at N113.

This sequence belongs to the NGF-beta family.

It localises to the secreted. Seems to promote the survival of visceral and proprioceptive sensory neurons. The sequence is that of Neurotrophin-3 (NTF3) from Sanzinia madagascariensis (Madagascar tree boa).